The chain runs to 82 residues: Small ribosomal subunit protein bS16 (82 aa).

It belongs to the bacterial ribosomal protein bS16 family.

The protein is Small ribosomal subunit protein bS16 of Pectobacterium atrosepticum (strain SCRI 1043 / ATCC BAA-672) (Erwinia carotovora subsp. atroseptica).